Reading from the N-terminus, the 396-residue chain is NADH-quinone oxidoreductase subunit D (396 aa).

It belongs to the complex I 49 kDa subunit family. In terms of assembly, NDH-1 is composed of 14 different subunits. Subunits NuoB, C, D, E, F, and G constitute the peripheral sector of the complex.

The protein localises to the cell inner membrane. The catalysed reaction is a quinone + NADH + 5 H(+)(in) = a quinol + NAD(+) + 4 H(+)(out). In terms of biological role, NDH-1 shuttles electrons from NADH, via FMN and iron-sulfur (Fe-S) centers, to quinones in the respiratory chain. The immediate electron acceptor for the enzyme in this species is believed to be ubiquinone. Couples the redox reaction to proton translocation (for every two electrons transferred, four hydrogen ions are translocated across the cytoplasmic membrane), and thus conserves the redox energy in a proton gradient. This is NADH-quinone oxidoreductase subunit D from Rhizobium johnstonii (strain DSM 114642 / LMG 32736 / 3841) (Rhizobium leguminosarum bv. viciae).